The primary structure comprises 556 residues: Single-strand DNA-binding protein (556 aa).

Disordered stretches follow at residues M1–E95 and F527–L556. Polar residues-rich tracts occupy residues E10–F25 and V36–E51. Basic and acidic residues-rich tracts occupy residues T52–A73 and D539–P548.

In terms of assembly, interacts with host VIP2 that promotes T-DNA integration into the host genome. Forms a complex made of virE2 and host proteins VIP1 and VBF. Forms heterodimers with the chaperone protein virE1 that prevent virE2 anarchic homopolymerization. Interacts with A.thaliana VIP1 that mediates its translocation to the host nucleus. Forms a complex made of VirE2, host VIP1 and VIP2 and single-stranded DNA (ssDNA).

It localises to the secreted. Its subcellular location is the host nucleus. Its function is as follows. Involved in DNA transformation; mediates the nuclear uptake of single-stranded DNA copies of the transferred DNA (T-DNA) element. Binds single-stranded but not double-stranded DNA regardless of nucleotide sequence composition. The chain is Single-strand DNA-binding protein (virE2) from Agrobacterium fabrum (strain C58 / ATCC 33970) (Agrobacterium tumefaciens (strain C58)).